Reading from the N-terminus, the 340-residue chain is Phosphate carrier protein, mitochondrial (340 aa).

A mitochondrion-targeting transit peptide spans 1-27 (MSVFSQLAESSKQNPFSLPVRSGNCAS). Solcar repeat units lie at residues 41–125 (KYYA…FKNV), 138–222 (YRTS…TVEA), and 239–317 (EQLV…VKVA). A run of 6 helical transmembrane segments spans residues 47-67 (ALGG…LDLV), 95-114 (RALV…QGLG), 141-161 (SLYL…LAPM), 200-220 (PLWM…EKTV), 241-261 (LVVT…VSHP), and 297-317 (IIMI…VKVA).

It belongs to the mitochondrial carrier (TC 2.A.29) family.

Its subcellular location is the mitochondrion inner membrane. Transport of phosphate groups from the cytosol to the mitochondrial matrix. This is Phosphate carrier protein, mitochondrial from Caenorhabditis elegans.